The chain runs to 477 residues: Homospermidine synthase (477 aa).

This sequence belongs to the saccharopine dehydrogenase family. Homodimer. NAD(+) serves as cofactor.

It carries out the reaction 2 putrescine = sym-homospermidine + NH4(+). It catalyses the reaction putrescine + spermidine = sym-homospermidine + propane-1,3-diamine. Its function is as follows. Involved in the NAD(+)-dependent synthesis of the polyamine homospermidine from putrescine. The protein is Homospermidine synthase (hss) of Blastochloris viridis (Rhodopseudomonas viridis).